The sequence spans 120 residues: MSRVKSGKVTHARHRKVIKAAKGYYAARSTNFRTATQAVDKANQYATRDRKARKRNFRALWIQRINAAVRLFDLEMTYSRFINGLAKAGIEVDRKVLADLAVHEPEAFNAIAARAKAALA.

Belongs to the bacterial ribosomal protein bL20 family.

Its function is as follows. Binds directly to 23S ribosomal RNA and is necessary for the in vitro assembly process of the 50S ribosomal subunit. It is not involved in the protein synthesizing functions of that subunit. This is Large ribosomal subunit protein bL20 from Cereibacter sphaeroides (strain ATCC 17025 / ATH 2.4.3) (Rhodobacter sphaeroides).